Reading from the N-terminus, the 6857-residue chain is Replicase polyprotein 1ab (6857 aa).

Residues 1679 to 1860 form the Macro domain; sequence FEQYYEFKIG…QYNQAFAVIK (182 aa). The disordered stretch occupies residues 2158 to 2191; that stretch reads QVGQGGQQDGQVDQQIKESEQVVEPSAPSGQESP. Helical transmembrane passes span 2303–2323, 2330–2350, 2385–2405, 2535–2555, 2639–2659, 2664–2684, 2889–2909, 3057–3077, 3106–3126, and 3142–3162; these read LTYN…FGVL, TPFY…LMIW, LVQW…DYVV, LFYS…YVLF, VTVS…VVVL, FIWF…IILF, TTLV…LMVG, IISP…FLIL, VLFV…LALW, and LFIL…GFVF. Residues 2303–2683 are HD1; sequence LTYNIKFKLI…VMMPVFVIIL (381 aa). The segment at 2889–3162 is HD2; that stretch reads TTLVIVMGVL…FLFMVGGFVF (274 aa). Active-site charge relay system; for 3C-like serine proteinase activity residues include His3304, Glu3347, and Ser3416. Positions 3555–3738 are HD3; the sequence is HLHFIFSIYF…IVIVLSFRVF (184 aa). 7 helical membrane passes run 3556-3575, 3580-3602, 3611-3631, 3640-3660, 3663-3683, 3698-3718, and 3723-3738; these read LHFI…YWWL, SVVL…NVLF, LAVT…LGFL, SLII…VVNV, AIFV…LGIV, AVFT…LLLF, and LMSF…FRVF. The region spanning 4566–4797 is the NiRAN domain; that stretch reads DFKLLRGAWS…ANEMEIPTDY (232 aa). The RdRp catalytic domain occupies 5105–5256; sequence FDVFGSDYTK…FSKPEALKIF (152 aa). One can recognise a CV ZBD domain in the interval 5413–5528; sequence FDKVCFCCPN…NGVAQLLTSV (116 aa). Residues Cys5417, Cys5420, Cys5428, Cys5431, Cys5438, Cys5441, His5445, His5451, Cys5460, Cys5462, Cys5483, and Cys5486 each contribute to the Zn(2+) site. The region spanning 5633–5812 is the (+)RNA virus helicase ATP-binding domain; sequence NQPWRLATCF…LQLATQKRYL (180 aa). Residues 5813–5972 form the (+)RNA virus helicase C-terminal domain; it reads TACYRCPPQI…FGMEKQSDFN (160 aa). In terms of domain architecture, ExoN spans 5970 to 6183; that stretch reads DFNIIPEVSS…YLASYEAAFK (214 aa). Residues Asp5984, Glu5986, and Asp6085 contribute to the active site. The Zn(2+) site is built by His6149, Cys6153, and His6157. Residues His6161 and Asp6166 contribute to the active site. Residue Cys6172 coordinates Zn(2+). The NendoU domain occupies 6451-6591; sequence LPDTLFSTGR…GEDDIQTFYP (141 aa). Active-site residues include His6487, His6504, Lys6536, Lys6633, Asp6709, Lys6737, and Glu6771. A Nidovirus-type SAM-dependent 2'-O-MTase domain is found at 6593 to 6857; that stretch reads KDFVRSYYEW…EVPMLCQMEH (265 aa).

Specific enzymatic cleavages in vivo by its own protease yield mature proteins. 3CL-PRO is autocatalytically processed.

The protein localises to the host membrane. The enzyme catalyses RNA(n) + a ribonucleoside 5'-triphosphate = RNA(n+1) + diphosphate. It catalyses the reaction ATP + H2O = ADP + phosphate + H(+). Functionally, the 3C-like serine proteinase is responsible for the majority of cleavages. In terms of biological role, the helicase which contains a zinc finger structure displays RNA and DNA duplex-unwinding activities with 5' to 3' polarity. Its function is as follows. Acts on both ssRNA and dsRNA in a 3' to 5' direction. NendoU is a Mn(2+)-dependent, uridylate-specific enzyme, which leaves 2'-3'-cyclic phosphates 5' to the cleaved bond. The polypeptide is Replicase polyprotein 1ab (rep) (Equus caballus (Horse)).